Here is a 398-residue protein sequence, read N- to C-terminus: S-adenosylmethionine decarboxylase proenzyme (398 aa).

Residues Glu18 and Glu21 contribute to the active site. Ser78 acts as the Schiff-base intermediate with substrate; via pyruvic acid in catalysis. The residue at position 78 (Ser78) is a Pyruvic acid (Ser); by autocatalysis. The Proton donor; for catalytic activity role is filled by Cys92. Residues Ser243 and His256 each act as proton acceptor; for processing activity in the active site.

The protein belongs to the eukaryotic AdoMetDC family. Requires pyruvate as cofactor. In terms of processing, is synthesized initially as an inactive proenzyme. Formation of the active enzyme involves a self-maturation process in which the active site pyruvoyl group is generated from an internal serine residue via an autocatalytic post-translational modification. Two non-identical subunits are generated from the proenzyme in this reaction, and the pyruvate is formed at the N-terminus of the alpha chain, which is derived from the carboxyl end of the proenzyme. The post-translation cleavage follows an unusual pathway, termed non-hydrolytic serinolysis, in which the side chain hydroxyl group of the serine supplies its oxygen atom to form the C-terminus of the beta chain, while the remainder of the serine residue undergoes an oxidative deamination to produce ammonia and the pyruvoyl group blocking the N-terminus of the alpha chain.

It catalyses the reaction S-adenosyl-L-methionine + H(+) = S-adenosyl 3-(methylsulfanyl)propylamine + CO2. It participates in amine and polyamine biosynthesis; S-adenosylmethioninamine biosynthesis; S-adenosylmethioninamine from S-adenosyl-L-methionine: step 1/1. This is S-adenosylmethionine decarboxylase proenzyme (SAMDC) from Oryza sativa subsp. japonica (Rice).